The following is a 446-amino-acid chain: 3-phosphoshikimate 1-carboxyvinyltransferase (446 aa).

Positions 35, 36, and 40 each coordinate 3-phosphoshikimate. Lys-35 is a phosphoenolpyruvate binding site. Phosphoenolpyruvate-binding residues include Gly-108 and Arg-137. 3-phosphoshikimate-binding residues include Ser-182, Gln-184, Asp-332, and Lys-359. Gln-184 lines the phosphoenolpyruvate pocket. The active-site Proton acceptor is Asp-332. Positions 363 and 405 each coordinate phosphoenolpyruvate.

Belongs to the EPSP synthase family. As to quaternary structure, monomer.

The protein localises to the cytoplasm. The enzyme catalyses 3-phosphoshikimate + phosphoenolpyruvate = 5-O-(1-carboxyvinyl)-3-phosphoshikimate + phosphate. It participates in metabolic intermediate biosynthesis; chorismate biosynthesis; chorismate from D-erythrose 4-phosphate and phosphoenolpyruvate: step 6/7. Functionally, catalyzes the transfer of the enolpyruvyl moiety of phosphoenolpyruvate (PEP) to the 5-hydroxyl of shikimate-3-phosphate (S3P) to produce enolpyruvyl shikimate-3-phosphate and inorganic phosphate. This is 3-phosphoshikimate 1-carboxyvinyltransferase from Acaryochloris marina (strain MBIC 11017).